The following is a 1269-amino-acid chain: MTPTTNNKRINFASIKNPLFYPDFLEVQLKSFHDFLQLDTPPERRKKEGLYKVFAENFPITDTRNNFVLEFLDYYIDPPKYSIEECLSRGLTYSVPLKAKLKLYCTDPDHEDFATVIQDVFLGPIPYMTSSGTFVINGAERVIVSQLHRSPGVFFGQSLHTNGTKLYSARIIPFKGSWIEFATDINNVMYAYIDRKKKLPVTTLLRAIGFEADKDILDIFNLAEEVKVTKANLKKCIGRKLAARVINTYIDDLSDEDTGEVVSMERITVVVDREVELTEDNIEAILNSNTQTILLHRNDSNTSDYSIIFNTLQKDPCNSEKEALYYVYRQLRNAEPADDASAREVITNLFFSDKRYDLGDVGRYRINKKLNLNIDPDIKVLTNEDIIEIIKYLIELVNSKASVDDIDHLSNRRVRTVGEQLYNQFGIGLARMARTVRDRMNVRDNEVFTPIDLVNAKTISSVVNSFFGTNALSQFMDQTNPLAEITHKRRLSALGPGGLSRERAGFEVRDVHYTHYGRLCPIETPEGPNIGLISSLCVYAKISDLGFITTPYREVKNGKVDFSDNGLKYYTAEEEEEKTVAQGNAPLDENGRFVRERVKARYESDFPLVTPDEVDLMDVSPTQIASIAAALIPFLEHDDANRALMGSNMMRQAVPLLRPESPIVGTGIEGKLVKDSRTQIVAERGGEVVFVDASCIKIRYDRTADEEFVSFDDAIVTYYLPKYRKTNQSTTIDLHPICSKGDRVEAGQILTEGYSTQGGELALGRNVQVAYMPWKGYNYEDAIVLNERMVREDFFTSVHVDEYILEVRETKRGLEELTSDIPNVSEDATRDLDENGIVRIGAHIEPGDILIGKITPKGESDPTPEEKLLRAIFGDKAGDVKDASLKATPSLRGVVIDTKLFSKAAKKKSRTSTKEAVSKLDETYAKRQQQLHERLIDKLTELTKGKTCCGVKDYLNVELIKAGSKFAKKDLEALDFNVIQLSDWTNDAHTNELIKAVAVNYLKHSKEIEAELRRRKLDETIGDELPAGIVQMAKVYIAKKRKIQVGDKMAGRHGNKGIVSKIVRQEDMPFLADGTPVDICLNPLGVPSRMNLGQIFEAVLAWAGRKMNVKFATPIFDGASLNDMNEWTDKAGLPRDGKTYLYDGGTGERFDQPATVGVTYFLKLGHMVDDKMHARSIGPYSLITQQPLGGKAQFGGQRFGEMEVWALEAFGASHILQEILTVKSDDVVGRSKAYEAIVKGDPMPTPGIPESLNVLLHELKGLGLSFSLD.

Belongs to the RNA polymerase beta chain family. As to quaternary structure, the RNAP catalytic core consists of 2 alpha, 1 beta, 1 beta' and 1 omega subunit. When a sigma factor is associated with the core the holoenzyme is formed, which can initiate transcription.

The catalysed reaction is RNA(n) + a ribonucleoside 5'-triphosphate = RNA(n+1) + diphosphate. Functionally, DNA-dependent RNA polymerase catalyzes the transcription of DNA into RNA using the four ribonucleoside triphosphates as substrates. This Porphyromonas gingivalis (strain ATCC BAA-308 / W83) protein is DNA-directed RNA polymerase subunit beta.